Here is a 474-residue protein sequence, read N- to C-terminus: Membrane-bound acylglycerophosphatidylinositol O-acyltransferase mboat7 (474 aa).

Topologically, residues 1 to 5 (MSPNE) are cytoplasmic. A helical membrane pass occupies residues 6–22 (LTYLAILLGSAPLGFLF). Topologically, residues 23 to 33 (KNGSPQVKQRG) are lumenal. The chain crosses the membrane as a helical span at residues 34-57 (SAAVGVALTLITCHIHSLHSAITI). Residues 58 to 73 (LGTWLIIKILPRSCHF) are Cytoplasmic-facing. Residues 74-93 (PTLGWTFTYLLFFRTITYFD) traverse the membrane as a helical segment. Residues 94-193 (IPAPTPFTNA…IPSWKPLVSR (100 aa)) lie on the Lumenal side of the membrane. Residues 194 to 211 (LKPAPVFGVLFLIASQYF) form a helical membrane-spanning segment. Residues 212-230 (PLDYVKTDEFYEQAFLYRL) lie on the Cytoplasmic side of the membrane. The chain crosses the membrane as a helical span at residues 231–260 (FYMVPTFFIFRMRFYVAWIFAECGCISAAF). Topologically, residues 261-427 (GAYPVSAKSR…LTFTDTYRYW (167 aa)) are lumenal. Asn322 carries an N-linked (GlcNAc...) asparagine glycan. A helical membrane pass occupies residues 428-448 (QSIYFSVHVLAISLFLLGRVL). The Cytoplasmic portion of the chain corresponds to 449–473 (ALKSPRRPRNTKEEKAEAKQENRLQ).

This sequence belongs to the membrane-bound acyltransferase family.

The protein localises to the endoplasmic reticulum membrane. It carries out the reaction a 1-acyl-sn-glycero-3-phospho-(1D-myo-inositol) + (5Z,8Z,11Z,14Z)-eicosatetraenoyl-CoA = a 1-acyl-2-(5Z,8Z,11Z,14Z-eicosatetraenoyl)-sn-glycero-3-phospho-(1D-myo-inositol) + CoA. It catalyses the reaction (5Z,8Z,11Z,14Z)-eicosatetraenoyl-CoA + 1-hexadecanoyl-sn-glycero-3-phosphocholine = 1-hexadecanoyl-2-(5Z,8Z,11Z,14Z-eicosatetraenoyl)-sn-glycero-3-phosphocholine + CoA. The enzyme catalyses a 1-acyl-sn-glycero-3-phospho-(1D-myo-inositol) + an acyl-CoA = a 1,2-diacyl-sn-glycero-3-phospho-(1D-myo-inositol) + CoA. The catalysed reaction is 1-octadecanoyl-sn-glycero-3-phospho-(1D-myo-inositol) + (5Z,8Z,11Z,14Z)-eicosatetraenoyl-CoA = 1-octadecanoyl-2-(5Z,8Z,11Z,14Z-eicosatetraenoyl)-sn-glycero-3-phospho-(1D-myo-inositol) + CoA. Its pathway is lipid metabolism; phospholipid metabolism. Functionally, acyltransferase which catalyzes the transfer of an acyl group from an acyl-CoA to a lysophosphatidylinositol (1-acylglycerophosphatidylinositol or LPI) leading to the production of a phosphatidylinositol (1,2-diacyl-sn-glycero-3-phosphoinositol or PI) and participates in the reacylation step of the phospholipid remodeling pathway also known as the Lands cycle. Prefers arachidonoyl-CoA as the acyl donor, thus contributing to the regulation of free levels arachidonic acid in cell. The protein is Membrane-bound acylglycerophosphatidylinositol O-acyltransferase mboat7 (mboat7) of Xenopus laevis (African clawed frog).